The following is a 249-amino-acid chain: Glucosamine-6-phosphate deaminase (249 aa).

Residue Asp67 is the Proton acceptor; for enolization step of the active site. Asn136 (for ring-opening step) is an active-site residue. Residue His138 is the Proton acceptor; for ring-opening step of the active site. Glu143 functions as the For ring-opening step in the catalytic mechanism.

It belongs to the glucosamine/galactosamine-6-phosphate isomerase family. NagB subfamily.

The catalysed reaction is alpha-D-glucosamine 6-phosphate + H2O = beta-D-fructose 6-phosphate + NH4(+). It functions in the pathway amino-sugar metabolism; N-acetylneuraminate degradation; D-fructose 6-phosphate from N-acetylneuraminate: step 5/5. Functionally, catalyzes the reversible isomerization-deamination of glucosamine 6-phosphate (GlcN6P) to form fructose 6-phosphate (Fru6P) and ammonium ion. In Clostridium botulinum (strain Eklund 17B / Type B), this protein is Glucosamine-6-phosphate deaminase.